We begin with the raw amino-acid sequence, 1218 residues long: Sodium bicarbonate cotransporter 3 (1218 aa).

Disordered regions lie at residues 1–31 (MEAD…KTSS) and 53–99 (HVPF…SQRV). Residues 1-612 (MEADGAGEQM…DFKDALSLQC (612 aa)) are Extracellular-facing. 4 positions are modified to phosphoserine: Ser57, Ser60, Ser89, and Ser155. Positions 60 to 77 (SRRRHRHRGHKHHHRRRK) are enriched in basic residues. The segment covering 78 to 90 (DKDSDKEDGRESP) has biased composition (basic and acidic residues). An N-linked (GlcNAc...) asparagine glycan is attached at Asn176. Phosphoserine is present on residues Ser238, Ser247, and Arg263. A glycan (N-linked (GlcNAc...) asparagine) is linked at Asn274. Disordered stretches follow at residues 294–350 (SRAG…DIPR), 364–412 (KGQE…ENST), and 536–577 (SIRI…HAGP). The segment covering 308–318 (VPTPQNSPPSS) has biased composition (pro residues). A compositionally biased stretch (low complexity) spans 319–337 (PSLSRLTSRSSQQTQPQAP). Positions 383–396 (SPQSAPGNLDSSKS) are enriched in polar residues. Phosphoserine occurs at positions 386, 404, and 407. A glycan (N-linked (GlcNAc...) asparagine) is linked at Asn410. Phosphoserine is present on residues Ser411 and Ser560. The segment covering 567-576 (PPKEADHHAG) has biased composition (basic and acidic residues). Residues 613 to 633 (LASILFLYCACMSPVITFGGL) traverse the membrane as a helical segment. The Cytoplasmic segment spans residues 634–641 (LGEATEGR). A helical transmembrane segment spans residues 642 to 662 (ISAIESLFGASLTGIAYSLFA). Residues 663–699 (GQPLTILGSTGPVLVFEKILFKFCRDYHLSYLSLRTS) lie on the Extracellular side of the membrane. Residues 700 to 720 (IGLWTSFLCIVLVATDASSLV) form a helical membrane-spanning segment. Residues 721 to 729 (CYITRFTEE) are Cytoplasmic-facing. A helical membrane pass occupies residues 730-750 (AFAALICIIFIYEALEKLFHL). The Extracellular portion of the chain corresponds to 751 to 821 (GEIYAFNMHN…MFVGSACGPH (71 aa)). Cysteines 770 and 772 form a disulfide. Residues Asn780, Asn790, and Asn800 are each glycosylated (N-linked (GlcNAc...) asparagine). A disulfide bridge links Cys806 with Cys818. Residues 822-842 (GPYVPDVLFWCVVLFFTTFFL) traverse the membrane as a helical segment. The Cytoplasmic segment spans residues 843 to 865 (SSFLKQFKTKRYFPTKVRSTISD). A helical membrane pass occupies residues 866–886 (FAVFLTIVIMVAIDYLVGIPS). Over 887–912 (PKLHVPEKFEPTDPSRGWIISPLGDN) the chain is Extracellular. Residues 913–933 (PWWTLLIAAVPALLCTILIFM) form a helical membrane-spanning segment. Residues 934–958 (DQQITAVIINRKEHKLKKGAGYHLD) lie on the Cytoplasmic side of the membrane. Residues 959-979 (LLMVAVMLGVCSIMGLPWFVA) traverse the membrane as a helical segment. Residues 980 to 1015 (ATVLSISHVNSLKVESECSAPGEQPKFLGIREQRVT) are Extracellular-facing. The segment at 1012–1135 (QRVTGLMIFI…MDLCFTKREL (124 aa)) is essential for cell membrane localization and transport activity. Residues 1016–1036 (GLMIFILMGLSVFMTSVLKFI) form a helical membrane-spanning segment. At 1037 to 1038 (PM) the chain is on the cytoplasmic side. Residues 1039-1059 (PVLYGVFLYMGVSSLKGIQFF) traverse the membrane as a helical segment. Over 1060–1096 (DRIKLFGMPAKHQPDLIYLRYVPLWKVHVFTVVQLTC) the chain is Extracellular. Phosphoserine is present on residues Met1067 and Leu1078. A helical membrane pass occupies residues 1097-1117 (LVLLWVIKASAAAVVFPMMVL). The essential for interaction with RACK1 stretch occupies residues 1118–1140 (ALVFVRKLMDLCFTKRELSWLDD). Over 1118 to 1218 (ALVFVRKLMD…KKYMDAETSL (101 aa)) the chain is Cytoplasmic. The tract at residues 1138-1140 (LDD) is CA2-binding. Residues 1148 to 1165 (KKEDDKKKKEKEEAERML) show a composition bias toward basic and acidic residues. The tract at residues 1148–1172 (KKEDDKKKKEKEEAERMLQGDGDTV) is disordered. Thr1171 is modified (phosphothreonine). Phosphoserine occurs at positions 1180, 1188, 1201, and 1217. Positions 1215 to 1218 (ETSL) match the PDZ-binding motif.

It belongs to the anion exchanger (TC 2.A.31) family. In terms of assembly, interacts with USH1C. Forms a complex with ATP6V1B1 and NHERF1/EBP50. Interacts in a pH dependent-manner with CA2/carbonic anhydrase 2. Interacts with CFTR probably through NHERF1/EBP50. Interacts with RACK1. In terms of processing, undergoes lysosome-mediated degradation. Post-translationally, N-glycosylated. Expressed in aorta, ventricles, atrium, mesenteric artery, kidney, spleen, duodenum, jejunum, ileum, colon, lung, trachea, gastric fundus and pylorus, cerebrum, cerebellum, pancreas, liver, parotid gland, and epididymis. Expressed in the inner ear by cochlear outer and inner hair cells (at protein level). Highly expressed in testis and spleen. In terms of tissue distribution, specifically expressed in kidney. As to expression, specifically expressed in hippocampal neurons.

It localises to the basolateral cell membrane. The protein localises to the apical cell membrane. The protein resides in the cell projection. It is found in the stereocilium. Its subcellular location is the cell membrane. The catalysed reaction is hydrogencarbonate(in) + Na(+)(in) = hydrogencarbonate(out) + Na(+)(out). With respect to regulation, insensitive to stilbene derivatives. Its function is as follows. Electroneutral sodium- and bicarbonate-dependent cotransporter with a Na(+):HCO3(-) 1:1 stoichiometry. Mediates the sodium-dependent bicarbonate transport important for pH recovery after acid load as well as for regulation of steady-state pH in the duodenum and vascular smooth muscle cells. Plays a key role in macrophage acidification, mediating bicarbonate import into the cytoplasm which is crucial for net acid extrusion and maintenance of cytoplasmic pH during phagocytosis. Provides cellular bicarbonate for de novo purine and pyrimidine synthesis and is a key mediator of de novo nucleotide synthesis downstream of mTORC1 signaling in proliferating cells. The protein is Sodium bicarbonate cotransporter 3 (Slc4a7) of Rattus norvegicus (Rat).